A 142-amino-acid polypeptide reads, in one-letter code: Galactose-6-phosphate isomerase subunit LacA (142 aa).

This sequence belongs to the LacAB/RpiB family. In terms of assembly, heteromultimeric protein consisting of LacA and LacB.

The catalysed reaction is aldehydo-D-galactose 6-phosphate = keto-D-tagatose 6-phosphate. The protein operates within carbohydrate metabolism; D-galactose 6-phosphate degradation; D-tagatose 6-phosphate from D-galactose 6-phosphate: step 1/1. In Staphylococcus aureus (strain JH9), this protein is Galactose-6-phosphate isomerase subunit LacA.